Reading from the N-terminus, the 415-residue chain is Phosphoglycerate kinase (415 aa).

Residues 27–29, arginine 44, 67–70, arginine 124, and arginine 164 contribute to the substrate site; these read DVN and HQGR. Residues glutamate 336 and 362–365 each bind ATP; that span reads GGHM.

Belongs to the phosphoglycerate kinase family. In terms of assembly, monomer.

The protein localises to the cytoplasm. The enzyme catalyses (2R)-3-phosphoglycerate + ATP = (2R)-3-phospho-glyceroyl phosphate + ADP. It participates in carbohydrate degradation; glycolysis; pyruvate from D-glyceraldehyde 3-phosphate: step 2/5. In Sulfolobus acidocaldarius (strain ATCC 33909 / DSM 639 / JCM 8929 / NBRC 15157 / NCIMB 11770), this protein is Phosphoglycerate kinase.